Reading from the N-terminus, the 403-residue chain is Argininosuccinate synthase (403 aa).

Residues alanine 12–serine 20 and alanine 39 contribute to the ATP site. 2 residues coordinate L-citrulline: tyrosine 90 and serine 95. An ATP-binding site is contributed by glycine 120. Residues threonine 122, asparagine 126, and aspartate 127 each contribute to the L-aspartate site. Asparagine 126 lines the L-citrulline pocket. 5 residues coordinate L-citrulline: arginine 130, serine 182, serine 191, glutamate 267, and tyrosine 279.

It belongs to the argininosuccinate synthase family. Type 1 subfamily. In terms of assembly, homotetramer.

The protein resides in the cytoplasm. It catalyses the reaction L-citrulline + L-aspartate + ATP = 2-(N(omega)-L-arginino)succinate + AMP + diphosphate + H(+). It functions in the pathway amino-acid biosynthesis; L-arginine biosynthesis; L-arginine from L-ornithine and carbamoyl phosphate: step 2/3. This is Argininosuccinate synthase from Ruthia magnifica subsp. Calyptogena magnifica.